The chain runs to 683 residues: E3 ubiquitin-protein ligase RNF103 (683 aa).

4 helical membrane passes run 6–26 (FFLLLYFLVLFVLARFFEAIV), 326–346 (LFVLSLVLVNLMAWMDLFITQ), 366–386 (LLIISWLPVLGFLQLPYLDSF), and 411–431 (MFYTSHPALFLSTYLGHGLLI). Positions 525–542 (EEMSESSQDTENDSDSDN) are enriched in acidic residues. The interval 525 to 548 (EEMSESSQDTENDSDSDNMDTFSS) is disordered. The segment at 619–661 (CVVCLENFENGCLLMGLPCGHVFHQNCIVMWLAGGRHCCPVCR) adopts an RING-type zinc-finger fold.

In terms of assembly, interacts with DERL1 and VCP. In terms of tissue distribution, highly expressed in the normal cerebellum but not in the cerebral cortex.

It is found in the endoplasmic reticulum membrane. It catalyses the reaction S-ubiquitinyl-[E2 ubiquitin-conjugating enzyme]-L-cysteine + [acceptor protein]-L-lysine = [E2 ubiquitin-conjugating enzyme]-L-cysteine + N(6)-ubiquitinyl-[acceptor protein]-L-lysine.. It participates in protein modification; protein ubiquitination. Its function is as follows. Acts as an E2-dependent E3 ubiquitin-protein ligase, probably involved in the ER-associated protein degradation pathway. This is E3 ubiquitin-protein ligase RNF103 (Rnf103) from Mus musculus (Mouse).